The chain runs to 275 residues: Leucine-rich repeat-containing protein 3C (275 aa).

The first 41 residues, 1 to 41, serve as a signal peptide directing secretion; sequence MRMTSSSFVSYCTPGLCQFMAMLPTAGHLLPLLLVIGTGGT. The LRRNT domain occupies 42 to 79; it reads VPSPQVPPRGCYVAKEAGERTFRCSQAGLSAVPSGIPN. LRR repeat units lie at residues 80–101, 104–125, and 129–150; these read DTRK…AFQH, VLEE…AFQG, and TLRH…AFVG. Residue Asn156 is glycosylated (N-linked (GlcNAc...) asparagine). The 53-residue stretch at 160–212 folds into the LRRCT domain; it reads NPWHCDCALQEVLRQVRLVPGTGTGIVCGSGARPDLVGQEFLLLAGEEELCGS. The chain crosses the membrane as a helical span at residues 225-245; that stretch reads LLVTMGGWLTLMVAYLVHYVW.

Belongs to the LRRC3 family.

Its subcellular location is the membrane. The chain is Leucine-rich repeat-containing protein 3C (LRRC3C) from Homo sapiens (Human).